The primary structure comprises 432 residues: uncharacterized protein (432 aa).

Residues 1-14 (MSDTTDVPENQKSP) are compositionally biased toward polar residues. The segment at 1-42 (MSDTTDVPENQKSPKPSGKADKRKIEEKPENSSLKRKKFEDP) is disordered. Residues 18 to 30 (GKADKRKIEEKPE) show a composition bias toward basic and acidic residues. In terms of domain architecture, S4 RNA-binding spans 85–148 (RKMVEVFSGE…HEHPIRDLPI (64 aa)). D199 is a catalytic residue.

The protein belongs to the pseudouridine synthase RluA family.

This is an uncharacterized protein from Caenorhabditis elegans.